The chain runs to 485 residues: Rhamnulokinase (485 aa).

10–14 (ASSGR) is an ATP binding site. Residues A78 and 233 to 235 (HDT) each bind substrate. D234 serves as the catalytic Proton acceptor. T256 serves as a coordination point for ATP. Substrate is bound at residue N293. Q301 contacts ATP. C351 and C368 are joined by a disulfide. G400 is a binding site for ATP.

Belongs to the rhamnulokinase family. Mg(2+) is required as a cofactor.

The catalysed reaction is L-rhamnulose + ATP = L-rhamnulose 1-phosphate + ADP + H(+). Its pathway is carbohydrate degradation; L-rhamnose degradation; glycerone phosphate from L-rhamnose: step 2/3. In terms of biological role, involved in the catabolism of L-rhamnose (6-deoxy-L-mannose). Catalyzes the transfer of the gamma-phosphate group from ATP to the 1-hydroxyl group of L-rhamnulose to yield L-rhamnulose 1-phosphate. The sequence is that of Rhamnulokinase from Bacillus subtilis (strain 168).